The chain runs to 519 residues: Cytochrome P450 72C1 (519 aa).

Residues 10–30 traverse the membrane as a helical segment; it reads VFLIGFLILILNWVWRAVNWV. C467 is a heme binding site.

Belongs to the cytochrome P450 family. Heme serves as cofactor. In terms of tissue distribution, expressed in hypocotyls, roots, cotyledons, stamens and silique junctions.

It is found in the membrane. Functionally, atypical cytochrome P450 involved in brassinosteroids (BRs) inactivation and regulation of BRs homeostasis. Does not possess carbon 26 hydroxylase activity and may inactivate BRs by hydroxylation of carbons other than C-26. Acts in association with CYP734A1 to inactivate BRs and modulate photomorphogenesis. The chain is Cytochrome P450 72C1 (CYP72C1) from Arabidopsis thaliana (Mouse-ear cress).